The following is a 226-amino-acid chain: UPF0111 protein AF_1799 (226 aa).

This sequence belongs to the UPF0111 family.

This chain is UPF0111 protein AF_1799, found in Archaeoglobus fulgidus (strain ATCC 49558 / DSM 4304 / JCM 9628 / NBRC 100126 / VC-16).